Reading from the N-terminus, the 225-residue chain is Urease accessory protein UreF (225 aa).

This sequence belongs to the UreF family. As to quaternary structure, ureD, UreF and UreG form a complex that acts as a GTP-hydrolysis-dependent molecular chaperone, activating the urease apoprotein by helping to assemble the nickel containing metallocenter of UreC. The UreE protein probably delivers the nickel.

It localises to the cytoplasm. Functionally, required for maturation of urease via the functional incorporation of the urease nickel metallocenter. This is Urease accessory protein UreF from Thermosynechococcus vestitus (strain NIES-2133 / IAM M-273 / BP-1).